The following is a 585-amino-acid chain: Mycosin-5 (585 aa).

Residues 1-39 (MQRFGTGSSRSWCGRAGTATIAAVLLASGALTGLPPAYA) form the signal peptide. One can recognise a Peptidase S8 domain in the interval 83–521 (PKYMEMLNLN…YGVVDPVAAL (439 aa)). Catalysis depends on charge relay system residues Asp109 and His141. Residues 163 to 173 (VPRRPVTIPTT) show a composition bias toward low complexity. The interval 163-269 (VPRRPVTIPT…PALGPPPDAF (107 aa)) is disordered. Composition is skewed to pro residues over residues 196–224 (PAPPPEEGVPPGAPVPGPEPPPAPGPQPP) and 252–267 (NPHPSAPSPALGPPPD). Residue Ser466 is the Charge relay system of the active site. The helical transmembrane segment at 552–572 (VPIWVAAGGLAGALLIGGAVF) threads the bilayer.

Belongs to the peptidase S8 family.

It is found in the cell membrane. This chain is Mycosin-5, found in Mycobacterium tuberculosis (strain ATCC 25618 / H37Rv).